The primary structure comprises 569 residues: Adenine deaminase (569 aa).

This sequence belongs to the metallo-dependent hydrolases superfamily. Adenine deaminase family. Mn(2+) is required as a cofactor.

It carries out the reaction adenine + H2O + H(+) = hypoxanthine + NH4(+). This is Adenine deaminase from Desulfatibacillum aliphaticivorans.